The primary structure comprises 420 residues: MTLLALGINHKTAPVSLRERVTFSPESIDQALASLLQQPLVQGGVVLSTCNRTELYLSVEQQENLHEQLIAWLCNYHKLSPDEVKKSLYWHHGNDAVSHLMRVASGLDSLVLGEPQILGQVKKAFAESQREQSLSGELERLFQKTFSVAKRVRTETEIGASAVSVAFAACTLARQIFESLSELNVLLVGAGETIELVARHLREHQVKHMIIANRTRERAQALATEVGAEVITLPEIDARLADADIIISSTASPLPIIGKGMVERALKSRRNQPMLFVDIAVPRDIEPEVGKLSNAYLYSVDDLQAIIQHNMAQRQAAAVQAESIVQQESMNFMTWLRAQGAVETIRDYRSQAEQVRSEMTAKALAAIEQGANVEQVVNELAHKLTNRLIHAPTKSLQQAASDGDMERLQLLRDSLGLDQH.

Substrate contacts are provided by residues 49-52 (TCNR), Ser109, 114-116 (EPQ), and Gln120. Cys50 functions as the Nucleophile in the catalytic mechanism. Residue 189–194 (GAGETI) participates in NADP(+) binding.

It belongs to the glutamyl-tRNA reductase family. In terms of assembly, homodimer.

The catalysed reaction is (S)-4-amino-5-oxopentanoate + tRNA(Glu) + NADP(+) = L-glutamyl-tRNA(Glu) + NADPH + H(+). The protein operates within porphyrin-containing compound metabolism; protoporphyrin-IX biosynthesis; 5-aminolevulinate from L-glutamyl-tRNA(Glu): step 1/2. Catalyzes the NADPH-dependent reduction of glutamyl-tRNA(Glu) to glutamate 1-semialdehyde (GSA). The sequence is that of Glutamyl-tRNA reductase from Yersinia enterocolitica serotype O:8 / biotype 1B (strain NCTC 13174 / 8081).